A 667-amino-acid polypeptide reads, in one-letter code: uncharacterized protein (667 aa).

This is an uncharacterized protein from Magallana gigas (Pacific oyster).